The primary structure comprises 577 residues: 5'-AMP-activated protein kinase subunit gamma (577 aa).

The tract at residues 45-226 (QSEGVGGGEL…NNNNSNSNNN (182 aa)) is disordered. Over residues 58-88 (NNNTTNNNTPTNTTTTTNTNTTTMNNSNNNN) the composition is skewed to low complexity. Composition is skewed to polar residues over residues 106-121 (SIEQPSPSFISSSQDG) and 138-155 (ESQSPPNGDNQILNNNNM). Positions 165-226 (STDNKSSTNT…NNNNSNSNNN (62 aa)) are enriched in low complexity. 4 CBS domains span residues 279–341 (VIPI…KKPK), 364–426 (ERPS…QLPE), 438–499 (IGTF…LSPS), and 517–574 (QRPE…DVKS).

It belongs to the 5'-AMP-activated protein kinase gamma subunit family.

In terms of biological role, AMPK may be responsible for the regulation of fatty acid synthesis by phosphorylation of acetyl-CoA carboxylase. The sequence is that of 5'-AMP-activated protein kinase subunit gamma (prkag) from Dictyostelium discoideum (Social amoeba).